Here is a 241-residue protein sequence, read N- to C-terminus: NAD(P)H-quinone oxidoreductase subunit K (241 aa).

[4Fe-4S] cluster is bound by residues Cys60, Cys61, Cys125, and Cys156. Positions 220–241 (SSQKEKITELPEKTEITNTEKD) are disordered. Over residues 222–241 (QKEKITELPEKTEITNTEKD) the composition is skewed to basic and acidic residues.

It belongs to the complex I 20 kDa subunit family. As to quaternary structure, NDH-1 can be composed of about 15 different subunits; different subcomplexes with different compositions have been identified which probably have different functions. [4Fe-4S] cluster is required as a cofactor.

Its subcellular location is the cellular thylakoid membrane. The catalysed reaction is a plastoquinone + NADH + (n+1) H(+)(in) = a plastoquinol + NAD(+) + n H(+)(out). It catalyses the reaction a plastoquinone + NADPH + (n+1) H(+)(in) = a plastoquinol + NADP(+) + n H(+)(out). Functionally, NDH-1 shuttles electrons from an unknown electron donor, via FMN and iron-sulfur (Fe-S) centers, to quinones in the respiratory and/or the photosynthetic chain. The immediate electron acceptor for the enzyme in this species is believed to be plastoquinone. Couples the redox reaction to proton translocation, and thus conserves the redox energy in a proton gradient. Cyanobacterial NDH-1 also plays a role in inorganic carbon-concentration. In Prochlorococcus marinus (strain MIT 9215), this protein is NAD(P)H-quinone oxidoreductase subunit K.